The sequence spans 376 residues: MFPFCDSSSPMDLPLYQQLQLSPSSPKTDQSSSFYCYPCSPPFAAADASFPLSYQIGSAAAADATPPQAVINSPDLPVQALMDHAPAPATELGACASGAEGSGASLDRAAAAARKDRHSKICTAGGMRDRRMRLSLDVARKFFALQDMLGFDKASKTVQWLLNTSKSAIQEIMADDASSECVEDGSSSLSVDGKHNPAEQLGGGGDQKPKGNCRGEGKKPAKASKAAATPKPPRKSANNAHQVPDKETRAKARERARERTKEKHRMRWVKLASAIDVEAAAASGPSDRPSSNNLSHHSSLSMNMPCAAAELEERERCSSALSNRSAGRMQEITGASDVVLGFGNGGGGYGDGGGNYYCQEQWELGGVVFQQNSRFY.

Positions 114–172 (RKDRHSKICTAGGMRDRRMRLSLDVARKFFALQDMLGFDKASKTVQWLLNTSKSAIQEI) constitute a TCP domain. 2 disordered regions span residues 179–266 (SECV…KHRM) and 280–299 (AAAS…HHSS). 2 stretches are compositionally biased toward basic and acidic residues: residues 207-219 (QKPK…EGKK) and 243-261 (VPDK…ERTK). The R domain maps to 246–263 (KETRAKARERARERTKEK). Over residues 290-299 (SSNNLSHHSS) the composition is skewed to low complexity.

Expressed in axillary inflorescence primordia, immature internodes below these primordia, and immature husk surrounding these primordia.

Its subcellular location is the nucleus. Its function is as follows. Transcription factor. Involved in apical dominance. Represses the growth of axillary organs (e.g. lateral branches), but enables the formation of female inflorescences. Regulates the number and length of axillary branches. The chain is Transcription factor TEOSINTE BRANCHED 1 (TB1) from Zea mays (Maize).